The sequence spans 89 residues: Small ribosomal subunit protein uS15 (89 aa).

Residues 1–11 (MSITAERKAEV) are compositionally biased toward basic and acidic residues. Residues 1 to 24 (MSITAERKAEVIKTSATKAGDTGS) are disordered.

The protein belongs to the universal ribosomal protein uS15 family. As to quaternary structure, part of the 30S ribosomal subunit. Forms a bridge to the 50S subunit in the 70S ribosome, contacting the 23S rRNA.

In terms of biological role, one of the primary rRNA binding proteins, it binds directly to 16S rRNA where it helps nucleate assembly of the platform of the 30S subunit by binding and bridging several RNA helices of the 16S rRNA. Functionally, forms an intersubunit bridge (bridge B4) with the 23S rRNA of the 50S subunit in the ribosome. The protein is Small ribosomal subunit protein uS15 of Rhodopseudomonas palustris (strain TIE-1).